A 152-amino-acid chain; its full sequence is Deoxyuridine 5'-triphosphate nucleotidohydrolase (152 aa).

Residues 70-72, Asn-83, 87-89, and Met-97 each bind substrate; these read RSG and LID.

The protein belongs to the dUTPase family. Mg(2+) serves as cofactor.

It carries out the reaction dUTP + H2O = dUMP + diphosphate + H(+). Its pathway is pyrimidine metabolism; dUMP biosynthesis; dUMP from dCTP (dUTP route): step 2/2. This enzyme is involved in nucleotide metabolism: it produces dUMP, the immediate precursor of thymidine nucleotides and it decreases the intracellular concentration of dUTP so that uracil cannot be incorporated into DNA. This Buchnera aphidicola subsp. Baizongia pistaciae (strain Bp) protein is Deoxyuridine 5'-triphosphate nucleotidohydrolase.